The following is a 175-amino-acid chain: Putative FAS1 domain-containing protein 081L (175 aa).

The region spanning 28 to 172 is the FAS1 domain; the sequence is GPIVPSVWTI…GLVHIVDQFP (145 aa).

The polypeptide is Putative FAS1 domain-containing protein 081L (Invertebrate iridescent virus 3 (IIV-3)).